Consider the following 1207-residue polypeptide: DNA-directed RNA polymerase subunit beta' (1207 aa).

Zn(2+) contacts are provided by Cys-60, Cys-62, Cys-75, and Cys-78. Asp-450, Asp-452, and Asp-454 together coordinate Mg(2+). Zn(2+) contacts are provided by Cys-819, Cys-893, Cys-900, and Cys-903.

Belongs to the RNA polymerase beta' chain family. In terms of assembly, the RNAP catalytic core consists of 2 alpha, 1 beta, 1 beta' and 1 omega subunit. When a sigma factor is associated with the core the holoenzyme is formed, which can initiate transcription. The cofactor is Mg(2+). Zn(2+) serves as cofactor.

The catalysed reaction is RNA(n) + a ribonucleoside 5'-triphosphate = RNA(n+1) + diphosphate. Its function is as follows. DNA-dependent RNA polymerase catalyzes the transcription of DNA into RNA using the four ribonucleoside triphosphates as substrates. In Streptococcus pyogenes serotype M3 (strain ATCC BAA-595 / MGAS315), this protein is DNA-directed RNA polymerase subunit beta'.